We begin with the raw amino-acid sequence, 640 residues long: 1,4-alpha-glucan branching enzyme GlgB (640 aa).

Asp-318 (nucleophile) is an active-site residue. The active-site Proton donor is the Glu-371.

This sequence belongs to the glycosyl hydrolase 13 family. GlgB subfamily. Monomer.

It carries out the reaction Transfers a segment of a (1-&gt;4)-alpha-D-glucan chain to a primary hydroxy group in a similar glucan chain.. It participates in glycan biosynthesis; glycogen biosynthesis. In terms of biological role, catalyzes the formation of the alpha-1,6-glucosidic linkages in glycogen by scission of a 1,4-alpha-linked oligosaccharide from growing alpha-1,4-glucan chains and the subsequent attachment of the oligosaccharide to the alpha-1,6 position. This chain is 1,4-alpha-glucan branching enzyme GlgB, found in Francisella tularensis subsp. novicida (strain U112).